The chain runs to 669 residues: 5-taurinomethyluridine-[tRNA] synthase subunit MTO1, mitochondrial (669 aa).

Residues 1 to 25 constitute a mitochondrion transit peptide; it reads MFLLRGRGHWAAASLGRRLPLRRLR. FAD-binding positions include 42–47, V154, S217, and Q406; that span reads GGGHAG. At K507 the chain carries N6-methyllysine.

It belongs to the MnmG family. In terms of assembly, homodimer; forms a dimer in the presence of potassium. Interacts with GTPBP3; forms the GTPBP3-MTO1 complex composed of homodimers of GTPBP3 and MTO1. FAD serves as cofactor. As to expression, ubiquitously expressed in various tissues, but with markedly elevated expression in tissues of high metabolic rates.

It is found in the mitochondrion. It catalyses the reaction 5,10-methylenetetrahydrofolate + uridine(34) in tRNA + taurine + GTP + A + H2O = 5-taurinomethyluridine(34) in tRNA + 7,8-dihydrofolate + GDP + AH2 + phosphate + H(+). In terms of biological role, component of the GTPBP3-MTO1 complex that catalyzes the 5-taurinomethyluridine (taum(5)U) modification at the 34th wobble position (U34) of mitochondrial tRNAs (mt-tRNAs), which plays a role in mt-tRNA decoding and mitochondrial translation. Taum(5)U formation on mammalian mt-tRNA requires the presence of both GTPBP3-mediated GTPase activity and MTO1 catalytic activity. The polypeptide is 5-taurinomethyluridine-[tRNA] synthase subunit MTO1, mitochondrial (Mus musculus (Mouse)).